The primary structure comprises 445 residues: Exodeoxyribonuclease 7 large subunit (445 aa).

Belongs to the XseA family. Heterooligomer composed of large and small subunits.

It is found in the cytoplasm. It carries out the reaction Exonucleolytic cleavage in either 5'- to 3'- or 3'- to 5'-direction to yield nucleoside 5'-phosphates.. In terms of biological role, bidirectionally degrades single-stranded DNA into large acid-insoluble oligonucleotides, which are then degraded further into small acid-soluble oligonucleotides. The protein is Exodeoxyribonuclease 7 large subunit of Staphylococcus saprophyticus subsp. saprophyticus (strain ATCC 15305 / DSM 20229 / NCIMB 8711 / NCTC 7292 / S-41).